The following is a 617-amino-acid chain: Putative metal ion transporter C17A12.14 (617 aa).

The disordered stretch occupies residues 1-141; it reads MPSNTSRSVP…GKNTRDQPSP (141 aa). Ser-105 carries the post-translational modification Phosphoserine. Residues 117-136 are compositionally biased toward basic and acidic residues; sequence SHPEDIQRKEFETENGKNTR. A phosphoserine mark is found at Ser-152, Ser-162, Ser-226, and Ser-241. A run of 2 helical transmembrane segments spans residues 560 to 580 and 590 to 610; these read TILGTILIPLNLVTGLWGMNV and LGWFFSILGSLMIFAISSFIL.

The protein belongs to the CorA metal ion transporter (MIT) (TC 1.A.35) family. As to quaternary structure, interacts with sad1.

It localises to the membrane. The chain is Putative metal ion transporter C17A12.14 from Schizosaccharomyces pombe (strain 972 / ATCC 24843) (Fission yeast).